We begin with the raw amino-acid sequence, 185 residues long: Ubiquitin-conjugating enzyme E2 5 (185 aa).

Positions 1–148 (MSSPSKRREM…VKEYCEKYAK (148 aa)) constitute a UBC core domain. Residue cysteine 85 is the Glycyl thioester intermediate of the active site. The tract at residues 146–185 (YAKPRADTEEMSSDDEMSEDEYASDGDDEDDVAIAGKLDP) is disordered. Acidic residues predominate over residues 154-177 (EEMSSDDEMSEDEYASDGDDEDDV).

Belongs to the ubiquitin-conjugating enzyme family. Expressed in developing ovules, but not in vascular tissues.

The catalysed reaction is S-ubiquitinyl-[E1 ubiquitin-activating enzyme]-L-cysteine + [E2 ubiquitin-conjugating enzyme]-L-cysteine = [E1 ubiquitin-activating enzyme]-L-cysteine + S-ubiquitinyl-[E2 ubiquitin-conjugating enzyme]-L-cysteine.. The protein operates within protein modification; protein ubiquitination. In terms of biological role, accepts the ubiquitin from the E1 complex and catalyzes its covalent attachment to other proteins. The polypeptide is Ubiquitin-conjugating enzyme E2 5 (UBC5) (Arabidopsis thaliana (Mouse-ear cress)).